The sequence spans 177 residues: Large ribosomal subunit protein uL6 (177 aa).

This sequence belongs to the universal ribosomal protein uL6 family. In terms of assembly, part of the 50S ribosomal subunit.

In terms of biological role, this protein binds to the 23S rRNA, and is important in its secondary structure. It is located near the subunit interface in the base of the L7/L12 stalk, and near the tRNA binding site of the peptidyltransferase center. This is Large ribosomal subunit protein uL6 from Cupriavidus taiwanensis (strain DSM 17343 / BCRC 17206 / CCUG 44338 / CIP 107171 / LMG 19424 / R1) (Ralstonia taiwanensis (strain LMG 19424)).